The sequence spans 205 residues: Large ribosomal subunit protein eL15 (205 aa).

Disordered regions lie at residues 70–90 (GRKR…HGVN) and 172–197 (RGLR…KRRN).

The protein belongs to the eukaryotic ribosomal protein eL15 family.

In Dictyostelium discoideum (Social amoeba), this protein is Large ribosomal subunit protein eL15 (rpl15-1).